The primary structure comprises 302 residues: Heme A synthase (302 aa).

The Cytoplasmic portion of the chain corresponds to 1-6; that stretch reads MNKALK. Residues 7–27 form a helical membrane-spanning segment; it reads GLGIITTIAMLFVLIGGALVT. Residues 28-61 lie on the Extracellular side of the membrane; that stretch reads KTGSGMGCGRSWPLCNGSIFPALTLESIIEWSHR. Residues Cys35 and Cys42 are joined by a disulfide bond. Glu57 is a catalytic residue. His60 lines the heme o pocket. The helical transmembrane segment at 62 to 82 threads the bilayer; sequence FVSGTSGVLVLALAIWTWKKI. The Cytoplasmic portion of the chain corresponds to 83-91; it reads GHIRETKFL. The chain crosses the membrane as a helical span at residues 92–112; that stretch reads AVMSVVFLILQALLGAAAVVF. Over 113–120 the chain is Extracellular; that stretch reads GSSALIMA. A helical membrane pass occupies residues 121-141; sequence LHFGISLISFASVLLLTLLVF. His122 serves as a coordination point for heme o. The Cytoplasmic segment spans residues 142–158; it reads EADSKQKSESFYIGKTM. A helical transmembrane segment spans residues 159–179; that stretch reads QFHMIGIIIYTYVVVYTGAYV. Over 180-208 the chain is Extracellular; it reads RHTSSSLACLDFPMCSTENGWLPGKFHEW. Cys188 and Cys194 are disulfide-bonded. The chain crosses the membrane as a helical span at residues 209–229; sequence VQMGHRAAALLLFAWIIAAAV. His213 is a binding site for heme b. Over 230-242 the chain is Cytoplasmic; sequence HAARQYKNQKRIY. Residues 243-263 form a helical membrane-spanning segment; sequence WGWMISLILIILQAASGIAVV. The Extracellular portion of the chain corresponds to 264–272; the sequence is YSRLDLGFA. Residues 273-293 traverse the membrane as a helical segment; the sequence is LAHAFFISCLFGILCYFLLLV. His275 is a heme b binding site. Over 294–302 the chain is Cytoplasmic; sequence ARYRRQVQK.

Belongs to the COX15/CtaA family. Type 1 subfamily. Interacts with CtaB. The cofactor is heme b.

Its subcellular location is the cell membrane. It carries out the reaction Fe(II)-heme o + 2 A + H2O = Fe(II)-heme a + 2 AH2. The protein operates within porphyrin-containing compound metabolism; heme A biosynthesis; heme A from heme O: step 1/1. Catalyzes the conversion of heme O to heme A by two successive hydroxylations of the methyl group at C8. The first hydroxylation forms heme I, the second hydroxylation results in an unstable dihydroxymethyl group, which spontaneously dehydrates, resulting in the formyl group of heme A. The chain is Heme A synthase from Bacillus licheniformis (strain ATCC 14580 / DSM 13 / JCM 2505 / CCUG 7422 / NBRC 12200 / NCIMB 9375 / NCTC 10341 / NRRL NRS-1264 / Gibson 46).